A 450-amino-acid chain; its full sequence is Probable cysteine desulfurase, mitochondrial (450 aa).

Residues 1 to 52 (MNRSILKFVKNGIISSSSRINNNGFINKNNNNRWFATLPQPNRGIAGEKQPI) constitute a mitochondrion transit peptide. Residues 120-121 (AT), N200, Q228, and 248-250 (SGH) each bind pyridoxal 5'-phosphate. At K251 the chain carries N6-(pyridoxal phosphate)lysine. T288 contributes to the pyridoxal 5'-phosphate binding site. Residue C374 is the Cysteine persulfide intermediate of the active site. C374 serves as a coordination point for [2Fe-2S] cluster.

Belongs to the class-V pyridoxal-phosphate-dependent aminotransferase family. NifS/IscS subfamily. Pyridoxal 5'-phosphate serves as cofactor.

It localises to the mitochondrion. The protein resides in the nucleus. The enzyme catalyses (sulfur carrier)-H + L-cysteine = (sulfur carrier)-SH + L-alanine. Catalyzes the removal of elemental sulfur from cysteine to produce alanine. It supplies the inorganic sulfur for iron-sulfur (Fe-S) clusters. This Dictyostelium discoideum (Social amoeba) protein is Probable cysteine desulfurase, mitochondrial (nfs1).